Here is a 697-residue protein sequence, read N- to C-terminus: Polyribonucleotide nucleotidyltransferase (697 aa).

2 residues coordinate Mg(2+): D486 and D492. The region spanning 553–612 is the KH domain; sequence PRIHTIKIHPDKIKDVIGKCGSVIRALTEETKTIIDIEDDGTVTVAATDSIKAQQAICRI. The S1 motif domain occupies 622–690; sequence GSIYHGKVTR…RQGRIRLSMK (69 aa).

Belongs to the polyribonucleotide nucleotidyltransferase family. In terms of assembly, component of the RNA degradosome, which is a multiprotein complex involved in RNA processing and mRNA degradation. Requires Mg(2+) as cofactor.

It localises to the cytoplasm. It catalyses the reaction RNA(n+1) + phosphate = RNA(n) + a ribonucleoside 5'-diphosphate. Its function is as follows. Involved in mRNA degradation. Catalyzes the phosphorolysis of single-stranded polyribonucleotides processively in the 3'- to 5'-direction. This chain is Polyribonucleotide nucleotidyltransferase, found in Baumannia cicadellinicola subsp. Homalodisca coagulata.